The following is a 230-amino-acid chain: MKKKKALPSLLYLVFIVLLPWGVSSSFNKCLELWIKNWWNTRQSETLLTDIQEKRILERFIELEELSLLDEMIKGKLKTHVQKPPTGIHKEIIQWVKINNEDHLHIILHFSTNIICLAILSGSFFLGKEELVILNSWVQEFFYNLNDSIKAFFILLVTDFFVGFHSTRGWELVIRWVYNDFGWAPNELIFTIFVCSFPVILDTCLKFWVFFCLNRLSPSLVVIYHSISEA.

Helical transmembrane passes span 7–27 (LPSL…SSSF), 106–126 (IILH…SFFL), 145–165 (LNDS…VGFH), and 181–201 (FGWA…PVIL).

The protein belongs to the CemA family.

The protein resides in the plastid. The protein localises to the chloroplast inner membrane. The catalysed reaction is K(+)(in) + H(+)(out) = K(+)(out) + H(+)(in). Contributes to K(+)/H(+) antiport activity by supporting proton efflux to control proton extrusion and homeostasis in chloroplasts in a light-dependent manner to modulate photosynthesis. Prevents excessive induction of non-photochemical quenching (NPQ) under continuous-light conditions. Indirectly promotes efficient inorganic carbon uptake into chloroplasts. This is Potassium/proton antiporter CemA from Hordeum vulgare (Barley).